The primary structure comprises 521 residues: Glucose-6-phosphate isomerase (521 aa).

Glu-327 (proton donor) is an active-site residue. Active-site residues include His-358 and Lys-486.

It belongs to the GPI family.

It localises to the cytoplasm. It carries out the reaction alpha-D-glucose 6-phosphate = beta-D-fructose 6-phosphate. It participates in carbohydrate biosynthesis; gluconeogenesis. The protein operates within carbohydrate degradation; glycolysis; D-glyceraldehyde 3-phosphate and glycerone phosphate from D-glucose: step 2/4. Functionally, catalyzes the reversible isomerization of glucose-6-phosphate to fructose-6-phosphate. In Bordetella petrii (strain ATCC BAA-461 / DSM 12804 / CCUG 43448), this protein is Glucose-6-phosphate isomerase.